A 248-amino-acid polypeptide reads, in one-letter code: MELATPRFRPDPSLSREAMETLQHDIAAAASFENEASPSPAAIRDGDALVAGVDQAFLDDRAVSAVVVLRGGEVVAREHAVTPLSIPYIPGLLAFREGGPIIDALSRLDVEPDLLVVDGSGRIHFREAGLATHAGLLFDVPAVGVAKRLLCGEPSRTVASLPEGTRVPIEADDSMTAADGTVVGYAYQSRQYPDSKRINPLYISPGHRLCAETAVDCVAACGGEYKLPRPTRLADGHADDLKARYGDG.

Mg(2+) is bound by residues Asp-54 and Asp-118.

The protein belongs to the endonuclease V family. Mg(2+) serves as cofactor.

It localises to the cytoplasm. The catalysed reaction is Endonucleolytic cleavage at apurinic or apyrimidinic sites to products with a 5'-phosphate.. DNA repair enzyme involved in the repair of deaminated bases. Selectively cleaves double-stranded DNA at the second phosphodiester bond 3' to a deoxyinosine leaving behind the intact lesion on the nicked DNA. The polypeptide is Endonuclease V (Natronomonas pharaonis (strain ATCC 35678 / DSM 2160 / CIP 103997 / JCM 8858 / NBRC 14720 / NCIMB 2260 / Gabara) (Halobacterium pharaonis)).